The following is a 1194-amino-acid chain: ATP-dependent RNA helicase DHX30 (1194 aa).

Residues 1–10 are compositionally biased toward basic and acidic residues; that stretch reads MFTLDSFRKD. The segment at 1–27 is disordered; the sequence is MFTLDSFRKDRTQHRQRQCKLPPPRLP. Serine 6 bears the Phosphoserine mark. Positions 53–121 constitute a DRBM domain; that stretch reads PKNLLNSVIG…QAAAAACQLF (69 aa). Positions 153 to 200 are disordered; that stretch reads WWRPEPTMPPTSWRQLNPENIRPAGTGGLSRSLGREEEEDEEEELEEG. Acidic residues predominate over residues 188-200; it reads EEEEDEEEELEEG. A phosphoserine mark is found at serine 226 and serine 380. The Helicase ATP-binding domain maps to 444–612; it reads LSAIEQHPVV…FGGCPVIKVP (169 aa). 457-464 serves as a coordination point for ATP; sequence GDTGCGKT. Positions 559 to 562 match the DEAH box motif; sequence DEVH. Residues 654-827 form the Helicase C-terminal domain; the sequence is LVTDLVLHID…NLVLQAKIHM (174 aa).

The protein belongs to the DEAD box helicase family. DEAH subfamily. Identified in a complex with TFAM and SSBP1. Interacts (via N-terminus) with ZC3HAV1 (via N-terminal domain) in an RNA-independent manner. Found in a complex with GRSF1, DDX28, FASTKD2 and FASTKD5.

The protein resides in the cytoplasm. It localises to the mitochondrion. Its subcellular location is the mitochondrion matrix. The protein localises to the mitochondrion nucleoid. The catalysed reaction is ATP + H2O = ADP + phosphate + H(+). RNA-dependent helicase. Plays an important role in the assembly of the mitochondrial large ribosomal subunit. Associates with mitochondrial DNA. Required for optimal function of the zinc-finger antiviral protein ZC3HAV1. Involved in nervous system development and differentiation through its involvement in the up-regulation of a number of genes which are required for neurogenesis, including GSC, NCAM1, neurogenin, and NEUROD. This chain is ATP-dependent RNA helicase DHX30 (Dhx30), found in Rattus norvegicus (Rat).